We begin with the raw amino-acid sequence, 283 residues long: GTPase Era (283 aa).

Positions 7 to 175 constitute an Era-type G domain; that stretch reads YCGHVIIVGK…KNIIKSYLPE (169 aa). The segment at 15–22 is G1; the sequence is GKANVGKS. 15–22 lines the GTP pocket; the sequence is GKANVGKS. The G2 stretch occupies residues 41–45; sequence NTTQS. The G3 stretch occupies residues 62–65; that stretch reads DTPG. GTP-binding positions include 62–66 and 124–127; these read DTPGV and NKID. The interval 124 to 127 is G4; it reads NKID. Positions 154–156 are G5; the sequence is ISA. The region spanning 198 to 283 is the KH type-2 domain; that stretch reads IREQLILFLG…HLVLWVKDKN (86 aa).

It belongs to the TRAFAC class TrmE-Era-EngA-EngB-Septin-like GTPase superfamily. Era GTPase family. Monomer.

It localises to the cytoplasm. The protein resides in the cell membrane. An essential GTPase that binds both GDP and GTP, with rapid nucleotide exchange. Plays a role in 16S rRNA processing and 30S ribosomal subunit biogenesis and possibly also in cell cycle regulation and energy metabolism. The protein is GTPase Era of Buchnera aphidicola subsp. Acyrthosiphon pisum (strain APS) (Acyrthosiphon pisum symbiotic bacterium).